The following is a 512-amino-acid chain: Serine--tRNA ligase, cytoplasmic (512 aa).

The residue at position 1 (M1) is an N-acetylmethionine. The interval 9–61 (RVDKGGDPALIRETQEKRFKDPGLVDQLVKADSEWRRCRFRADNLNKLKNLCS) is interaction with tRNA. Position 241 is a phosphoserine (S241). L-serine is bound by residues T271 and R302. Residues 302–304 (RQE) and 318–321 (VHQF) contribute to the ATP site. K323 is subject to N6-acetyllysine. E325 provides a ligand contact to L-serine. 391–394 (ELVS) contacts ATP. The L-serine site is built by N427 and T429. Residues 472-512 (KPAPIDQEPSKKQKKQHEGSKKKAKEVTLESQLQNMEVTEA) are disordered. A compositionally biased stretch (basic and acidic residues) spans 479-499 (EPSKKQKKQHEGSKKKAKEVT). A Nuclear localization signal motif is present at residues 482-494 (KKQKKQHEGSKKK). The span at 500-512 (LESQLQNMEVTEA) shows a compositional bias: polar residues.

Belongs to the class-II aminoacyl-tRNA synthetase family. Type-1 seryl-tRNA synthetase subfamily. In terms of assembly, homodimer. The tRNA molecule may bind across the dimer. Interacts with SIRT2. Interacts with METTL6; interaction is required for the tRNA N(3)-methylcytidine methyltransferase activity of METTL6.

Its subcellular location is the cytoplasm. The protein resides in the nucleus. The enzyme catalyses tRNA(Ser) + L-serine + ATP = L-seryl-tRNA(Ser) + AMP + diphosphate + H(+). The catalysed reaction is tRNA(Sec) + L-serine + ATP = L-seryl-tRNA(Sec) + AMP + diphosphate + H(+). Its pathway is aminoacyl-tRNA biosynthesis; selenocysteinyl-tRNA(Sec) biosynthesis; L-seryl-tRNA(Sec) from L-serine and tRNA(Sec): step 1/1. Its function is as follows. Catalyzes the attachment of serine to tRNA(Ser) in a two-step reaction: serine is first activated by ATP to form Ser-AMP and then transferred to the acceptor end of tRNA(Ser). Is probably also able to aminoacylate tRNA(Sec) with serine, to form the misacylated tRNA L-seryl-tRNA(Sec), which will be further converted into selenocysteinyl-tRNA(Sec). In the nucleus, binds to the VEGFA core promoter and prevents MYC binding and transcriptional activation by MYC. Recruits SIRT2 to the VEGFA promoter, promoting deacetylation of histone H4 at 'Lys-16' (H4K16). Thereby, inhibits the production of VEGFA and sprouting angiogenesis mediated by VEGFA. The sequence is that of Serine--tRNA ligase, cytoplasmic (SARS1) from Cricetulus griseus (Chinese hamster).